Reading from the N-terminus, the 84-residue chain is UPF0457 protein BT9727_2307 (84 aa).

This sequence belongs to the UPF0457 family.

The protein is UPF0457 protein BT9727_2307 of Bacillus thuringiensis subsp. konkukian (strain 97-27).